Here is a 211-residue protein sequence, read N- to C-terminus: Dual specificity protein phosphatase 26 (211 aa).

The 148-residue stretch at 60–207 folds into the Tyrosine-protein phosphatase domain; it reads NHADEVWPGL…LLALDRRLRQ (148 aa). Catalysis depends on Cys152, which acts as the Phosphocysteine intermediate.

Belongs to the protein-tyrosine phosphatase family. Non-receptor class dual specificity subfamily. In terms of assembly, interacts with HSF4.

It is found in the cytoplasm. Its subcellular location is the nucleus. The protein localises to the golgi apparatus. It carries out the reaction O-phospho-L-tyrosyl-[protein] + H2O = L-tyrosyl-[protein] + phosphate. The catalysed reaction is O-phospho-L-seryl-[protein] + H2O = L-seryl-[protein] + phosphate. The enzyme catalyses O-phospho-L-threonyl-[protein] + H2O = L-threonyl-[protein] + phosphate. Functionally, inactivates MAPK1 and MAPK3 which leads to dephosphorylation of heat shock factor protein 4 and a reduction in its DNA-binding activity. This Pongo abelii (Sumatran orangutan) protein is Dual specificity protein phosphatase 26 (DUSP26).